We begin with the raw amino-acid sequence, 442 residues long: Tubulin beta chain (442 aa).

GTP contacts are provided by Q11, E67, S136, G140, T141, G142, and N202. Residue E67 participates in Mg(2+) binding.

It belongs to the tubulin family. As to quaternary structure, dimer of alpha and beta chains. A typical microtubule is a hollow water-filled tube with an outer diameter of 25 nm and an inner diameter of 15 nM. Alpha-beta heterodimers associate head-to-tail to form protofilaments running lengthwise along the microtubule wall with the beta-tubulin subunit facing the microtubule plus end conferring a structural polarity. Microtubules usually have 13 protofilaments but different protofilament numbers can be found in some organisms and specialized cells. Mg(2+) is required as a cofactor.

Its subcellular location is the cytoplasm. It is found in the cytoskeleton. Its function is as follows. Tubulin is the major constituent of microtubules, a cylinder consisting of laterally associated linear protofilaments composed of alpha- and beta-tubulin heterodimers. Microtubules grow by the addition of GTP-tubulin dimers to the microtubule end, where a stabilizing cap forms. Below the cap, tubulin dimers are in GDP-bound state, owing to GTPase activity of alpha-tubulin. The polypeptide is Tubulin beta chain (TUBB) (Euglena gracilis).